Here is a 400-residue protein sequence, read N- to C-terminus: Arabinan endo-1,5-alpha-L-arabinosidase B (400 aa).

Residues 1-16 form the signal peptide; it reads MAVIFVLFFLVSMALS. A glycan (N-linked (GlcNAc...) asparagine) is linked at N24. The active-site Proton acceptor is D70. N-linked (GlcNAc...) asparagine glycosylation is present at N184. The Proton donor role is filled by E277. N372 is a glycosylation site (N-linked (GlcNAc...) asparagine).

This sequence belongs to the glycosyl hydrolase 43 family.

The protein localises to the secreted. It catalyses the reaction Endohydrolysis of (1-&gt;5)-alpha-arabinofuranosidic linkages in (1-&gt;5)-arabinans.. It functions in the pathway glycan metabolism; L-arabinan degradation. Functionally, endo-1,5-alpha-L-arabinanase involved in degradation of pectin. Its preferred substrate is linear 1,5-alpha-L-arabinan. The protein is Arabinan endo-1,5-alpha-L-arabinosidase B (abnB) of Emericella nidulans (strain FGSC A4 / ATCC 38163 / CBS 112.46 / NRRL 194 / M139) (Aspergillus nidulans).